Here is a 169-residue protein sequence, read N- to C-terminus: S-ribosylhomocysteine lyase (169 aa).

Residues His-54, His-58, and Cys-128 each coordinate Fe cation.

This sequence belongs to the LuxS family. In terms of assembly, homodimer. Fe cation is required as a cofactor.

The catalysed reaction is S-(5-deoxy-D-ribos-5-yl)-L-homocysteine = (S)-4,5-dihydroxypentane-2,3-dione + L-homocysteine. Involved in the synthesis of autoinducer 2 (AI-2) which is secreted by bacteria and is used to communicate both the cell density and the metabolic potential of the environment. The regulation of gene expression in response to changes in cell density is called quorum sensing. Catalyzes the transformation of S-ribosylhomocysteine (RHC) to homocysteine (HC) and 4,5-dihydroxy-2,3-pentadione (DPD). This chain is S-ribosylhomocysteine lyase, found in Shewanella oneidensis (strain ATCC 700550 / JCM 31522 / CIP 106686 / LMG 19005 / NCIMB 14063 / MR-1).